A 561-amino-acid polypeptide reads, in one-letter code: Zinc finger protein 37A (561 aa).

Residues 8 to 79 (VSFRDVTVGF…EEKFPSQSHL (72 aa)) form the KRAB domain. The C2H2-type 1; degenerate zinc finger occupies 146-168 (FEYNECGKAFPENSLFLVHKRGY). The C2H2-type 2; degenerate zinc finger occupies 243–265 (IEYNECGTFFSEKLVLHLQQRTH). 10 C2H2-type zinc fingers span residues 271 to 293 (YECH…QRTH), 299 to 321 (YECH…QRIH), 327 to 349 (YGCH…QRTH), 355 to 377 (YECH…QKTH), 383 to 405 (YECY…QRIH), 411 to 433 (YECN…LRTH), 439 to 461 (YECI…LRRH), 467 to 489 (FGCN…QRTH), 495 to 517 (YGCN…HRTH), and 523 to 545 (YECN…QRIH).

Belongs to the krueppel C2H2-type zinc-finger protein family.

It is found in the nucleus. May be involved in transcriptional regulation. The chain is Zinc finger protein 37A (ZNF37A) from Homo sapiens (Human).